Consider the following 84-residue polypeptide: Small ribosomal subunit protein uS17 (84 aa).

This sequence belongs to the universal ribosomal protein uS17 family. In terms of assembly, part of the 30S ribosomal subunit.

One of the primary rRNA binding proteins, it binds specifically to the 5'-end of 16S ribosomal RNA. This chain is Small ribosomal subunit protein uS17, found in Clostridioides difficile (strain 630) (Peptoclostridium difficile).